Reading from the N-terminus, the 271-residue chain is 5-deoxy-glucuronate isomerase (271 aa).

It belongs to the isomerase IolB family.

The catalysed reaction is 5-deoxy-D-glucuronate = 5-dehydro-2-deoxy-D-gluconate. It participates in polyol metabolism; myo-inositol degradation into acetyl-CoA; acetyl-CoA from myo-inositol: step 4/7. Its function is as follows. Involved in the isomerization of 5-deoxy-glucuronate (5DG) to 5-dehydro-2-deoxy-D-gluconate (DKG or 2-deoxy-5-keto-D-gluconate). This is 5-deoxy-glucuronate isomerase from Bacillus licheniformis (strain ATCC 14580 / DSM 13 / JCM 2505 / CCUG 7422 / NBRC 12200 / NCIMB 9375 / NCTC 10341 / NRRL NRS-1264 / Gibson 46).